A 295-amino-acid chain; its full sequence is Uridine and thymidine phosphorylase (295 aa).

Phosphate-binding positions include Arg-81 and 125–128 (RLGT). Substrate-binding residues include Gln-203 and Arg-205.

This sequence belongs to the PNP/UDP phosphorylase family. In terms of tissue distribution, expressed in hypodermis, pharynx, spermatheca and gonad.

It catalyses the reaction uridine + phosphate = alpha-D-ribose 1-phosphate + uracil. The catalysed reaction is thymidine + phosphate = 2-deoxy-alpha-D-ribose 1-phosphate + thymine. It carries out the reaction 2'-deoxyuridine + phosphate = 2-deoxy-alpha-D-ribose 1-phosphate + uracil. The protein operates within pyrimidine metabolism; UMP biosynthesis via salvage pathway; uracil from uridine (phosphorylase route): step 1/1. It functions in the pathway pyrimidine metabolism; dTMP biosynthesis via salvage pathway; dTMP from thymine: step 1/2. Its function is as follows. Catalyzes the reversible phosphorylytic cleavage of uridine and thymidine to uracil and ribose-phosphate or thymine and deoxyribose-1-phosphate. The produced molecules are then utilized as carbon and energy sources or in the rescue of pyrimidine bases for nucleotide synthesis. Required for normal lifespan. This Caenorhabditis elegans protein is Uridine and thymidine phosphorylase.